The primary structure comprises 714 residues: DNA ligase (714 aa).

NAD(+)-binding positions include Asp59–Asp63, Ser108–Leu109, and Glu139. Residue Lys141 is the N6-AMP-lysine intermediate of the active site. NAD(+) is bound by residues Arg162, Glu200, Lys325, and Lys349. Residues Cys443, Cys446, Cys461, and Cys466 each coordinate Zn(2+). One can recognise a BRCT domain in the interval Val624 to His713.

This sequence belongs to the NAD-dependent DNA ligase family. LigA subfamily. Mg(2+) is required as a cofactor. Mn(2+) serves as cofactor.

The enzyme catalyses NAD(+) + (deoxyribonucleotide)n-3'-hydroxyl + 5'-phospho-(deoxyribonucleotide)m = (deoxyribonucleotide)n+m + AMP + beta-nicotinamide D-nucleotide.. Functionally, DNA ligase that catalyzes the formation of phosphodiester linkages between 5'-phosphoryl and 3'-hydroxyl groups in double-stranded DNA using NAD as a coenzyme and as the energy source for the reaction. It is essential for DNA replication and repair of damaged DNA. The polypeptide is DNA ligase (Persephonella marina (strain DSM 14350 / EX-H1)).